The chain runs to 264 residues: Acetyl-coenzyme A carboxylase carboxyl transferase subunit beta (264 aa).

The CoA carboxyltransferase N-terminal domain occupies 4–264 (LWVKCKQCQQ…CGNSLEGVES (261 aa)). Zn(2+)-binding residues include cysteine 8, cysteine 11, cysteine 27, and cysteine 29. A C4-type zinc finger spans residues 8–29 (CKQCQQILLTKELEKNLKVCRC).

Belongs to the AccD/PCCB family. Acetyl-CoA carboxylase is a heterohexamer composed of biotin carboxyl carrier protein (AccB), biotin carboxylase (AccC) and two subunits each of ACCase subunit alpha (AccA) and ACCase subunit beta (AccD). Zn(2+) is required as a cofactor.

Its subcellular location is the cytoplasm. It carries out the reaction N(6)-carboxybiotinyl-L-lysyl-[protein] + acetyl-CoA = N(6)-biotinyl-L-lysyl-[protein] + malonyl-CoA. The protein operates within lipid metabolism; malonyl-CoA biosynthesis; malonyl-CoA from acetyl-CoA: step 1/1. Functionally, component of the acetyl coenzyme A carboxylase (ACC) complex. Biotin carboxylase (BC) catalyzes the carboxylation of biotin on its carrier protein (BCCP) and then the CO(2) group is transferred by the transcarboxylase to acetyl-CoA to form malonyl-CoA. This Heliobacterium modesticaldum (strain ATCC 51547 / Ice1) protein is Acetyl-coenzyme A carboxylase carboxyl transferase subunit beta.